We begin with the raw amino-acid sequence, 81 residues long: Putative sulfur carrier protein VNG_5061C/VNG_5236C/VNG_6059C/VNG_6467C (81 aa).

C18 serves as the catalytic Cysteine persulfide intermediate.

The protein belongs to the sulfur carrier protein TusA family.

The sequence is that of Putative sulfur carrier protein VNG_5061C/VNG_5236C/VNG_6059C/VNG_6467C from Halobacterium salinarum (strain ATCC 700922 / JCM 11081 / NRC-1) (Halobacterium halobium).